A 212-amino-acid chain; its full sequence is Pyrrolidone-carboxylate peptidase (212 aa).

Active-site residues include E80, C143, and H165.

It belongs to the peptidase C15 family. In terms of assembly, homotetramer.

The protein resides in the cytoplasm. It carries out the reaction Release of an N-terminal pyroglutamyl group from a polypeptide, the second amino acid generally not being Pro.. In terms of biological role, removes 5-oxoproline from various penultimate amino acid residues except L-proline. The protein is Pyrrolidone-carboxylate peptidase of Vibrio vulnificus (strain YJ016).